The primary structure comprises 56 residues: Cytochrome b-c1 complex subunit 10 (56 aa).

Residues 1-12 are Mitochondrial matrix-facing; it reads MVTRFLGPRYRE. Residues 13–35 traverse the membrane as a helical segment; sequence LVKNWVPTAYTWGAVGAVGLVWA. Residues 36 to 56 lie on the Mitochondrial intermembrane side of the membrane; sequence TDWRLILDWVPYINGKFKKDN.

The protein belongs to the UQCR11/QCR10 family. In terms of assembly, component of the ubiquinol-cytochrome c oxidoreductase (cytochrome b-c1 complex, complex III, CIII), a multisubunit enzyme composed of 11 subunits. The complex is composed of 3 respiratory subunits cytochrome b, cytochrome c1 and Rieske protein UQCRFS1, 2 core protein subunits UQCRC1/QCR1 and UQCRC2/QCR2, and 6 low-molecular weight protein subunits UQCRH/QCR6, UQCRB/QCR7, UQCRQ/QCR8, UQCR10/QCR9, UQCR11/QCR10 and subunit 9, the cleavage product of Rieske protein UQCRFS1. The complex exists as an obligatory dimer and forms supercomplexes (SCs) in the inner mitochondrial membrane with NADH-ubiquinone oxidoreductase (complex I, CI) and cytochrome c oxidase (complex IV, CIV), resulting in different assemblies (supercomplex SCI(1)III(2)IV(1) and megacomplex MCI(2)III(2)IV(2)).

It localises to the mitochondrion inner membrane. Its function is as follows. Component of the ubiquinol-cytochrome c oxidoreductase, a multisubunit transmembrane complex that is part of the mitochondrial electron transport chain which drives oxidative phosphorylation. The respiratory chain contains 3 multisubunit complexes succinate dehydrogenase (complex II, CII), ubiquinol-cytochrome c oxidoreductase (cytochrome b-c1 complex, complex III, CIII) and cytochrome c oxidase (complex IV, CIV), that cooperate to transfer electrons derived from NADH and succinate to molecular oxygen, creating an electrochemical gradient over the inner membrane that drives transmembrane transport and the ATP synthase. The cytochrome b-c1 complex catalyzes electron transfer from ubiquinol to cytochrome c, linking this redox reaction to translocation of protons across the mitochondrial inner membrane, with protons being carried across the membrane as hydrogens on the quinol. In the process called Q cycle, 2 protons are consumed from the matrix, 4 protons are released into the intermembrane space and 2 electrons are passed to cytochrome c. QCR10 has a role in CIII assembly and RIP1 stability. The sequence is that of Cytochrome b-c1 complex subunit 10 (UQCR11) from Homo sapiens (Human).